Here is a 274-residue protein sequence, read N- to C-terminus: Bis(5'-nucleosyl)-tetraphosphatase, symmetrical (274 aa).

This sequence belongs to the Ap4A hydrolase family.

The enzyme catalyses P(1),P(4)-bis(5'-adenosyl) tetraphosphate + H2O = 2 ADP + 2 H(+). Hydrolyzes diadenosine 5',5'''-P1,P4-tetraphosphate to yield ADP. In Shewanella baltica (strain OS223), this protein is Bis(5'-nucleosyl)-tetraphosphatase, symmetrical.